A 347-amino-acid polypeptide reads, in one-letter code: Protein O-mannose kinase (347 aa).

The Cytoplasmic portion of the chain corresponds to 1-14 (MGGTAVGGVIGVRC). The chain crosses the membrane as a helical; Signal-anchor for type II membrane protein span at residues 15-35 (GVPAVLLCLGALLCANVLLYF). Residues 36-347 (YLDALYQNTN…SQSQRVRDML (312 aa)) are Lumenal-facing. The Protein kinase domain maps to 79–347 (VRRVKLIGQG…SQSQRVRDML (269 aa)).

The protein belongs to the protein kinase superfamily. Ser/Thr protein kinase family. STKL subfamily.

It is found in the endoplasmic reticulum membrane. The enzyme catalyses 3-O-[beta-D-GalNAc-(1-&gt;3)-beta-D-GlcNAc-(1-&gt;4)-alpha-D-Man]-L-Thr-[protein] + ATP = 3-O-[beta-D-GalNAc-(1-&gt;3)-beta-D-GlcNAc-(1-&gt;4)-(O-6-P-alpha-D-Man)]-Thr-[protein] + ADP + H(+). Protein O-mannose kinase that specifically mediates phosphorylation at the 6-position of an O-mannose of the trisaccharide (N-acetylgalactosamine (GalNAc)-beta-1,3-N-acetylglucosamine (GlcNAc)-beta-1,4-mannose) to generate phosphorylated O-mannosyl trisaccharide (N-acetylgalactosamine-beta-1,3-N-acetylglucosamine-beta-1,4-(phosphate-6-)mannose). Phosphorylated O-mannosyl trisaccharide is a carbohydrate structure present in alpha-dystroglycan (dag1), which is required for binding laminin G-like domain-containing extracellular proteins with high affinity. Only shows kinase activity when the GalNAc-beta-3-GlcNAc-beta-terminus is linked to the 4-position of O-mannose, suggesting that this disaccharide serves as the substrate recognition motif. The protein is Protein O-mannose kinase (pomk) of Danio rerio (Zebrafish).